The chain runs to 406 residues: Peptidase T (406 aa).

His-82 contacts Zn(2+). The active site involves Asp-84. Asp-142 contributes to the Zn(2+) binding site. Glu-176 serves as the catalytic Proton acceptor. Residues Glu-177, Asp-199, and His-381 each coordinate Zn(2+).

This sequence belongs to the peptidase M20B family. Zn(2+) is required as a cofactor.

It localises to the cytoplasm. The catalysed reaction is Release of the N-terminal residue from a tripeptide.. Its function is as follows. Cleaves the N-terminal amino acid of tripeptides. This Streptococcus agalactiae serotype V (strain ATCC BAA-611 / 2603 V/R) protein is Peptidase T.